The sequence spans 37 residues: Large ribosomal subunit protein bL36 (37 aa).

Belongs to the bacterial ribosomal protein bL36 family.

In Solibacter usitatus (strain Ellin6076), this protein is Large ribosomal subunit protein bL36.